We begin with the raw amino-acid sequence, 462 residues long: Myrosinase-binding protein 1 (462 aa).

The segment at 1-23 (MSTGGPQKLEAQGGKEGKEWDDG) is disordered. Jacalin-type lectin domains lie at 6-148 (PQKL…YFAP), 157-300 (PNKV…YFAP), and 310-453 (TKKL…HIVP). Positions 13 to 23 (GGKEGKEWDDG) are enriched in basic and acidic residues.

The protein belongs to the jacalin lectin family. Expressed exclusively in flowers, in male and female organs, petals and pedicels. Not detected in pollen grains or sepals.

This is Myrosinase-binding protein 1 (MBP1) from Arabidopsis thaliana (Mouse-ear cress).